The primary structure comprises 230 residues: UPF0173 metal-dependent hydrolase MK1542 (230 aa).

This sequence belongs to the UPF0173 family.

This is UPF0173 metal-dependent hydrolase MK1542 from Methanopyrus kandleri (strain AV19 / DSM 6324 / JCM 9639 / NBRC 100938).